The sequence spans 707 residues: Bone morphogenetic protein 1 (707 aa).

The segment at 57–90 (SGAATNISRPEKGRRTRKERRRSREKRASTSRPE) is disordered. N-linked (GlcNAc...) asparagine glycosylation occurs at asparagine 62. Basic residues predominate over residues 68 to 81 (KGRRTRKERRRSRE). Residues 84 to 283 (ASTSRPERVW…AQARKLYKCP (200 aa)) enclose the Peptidase M12A domain. Residue asparagine 105 is glycosylated (N-linked (GlcNAc...) asparagine). Intrachain disulfides connect cysteine 126–cysteine 282, cysteine 146–cysteine 168, cysteine 148–cysteine 149, and cysteine 285–cysteine 311. Histidine 176 contacts Zn(2+). The active site involves glutamate 177. Residues histidine 180 and histidine 186 each coordinate Zn(2+). 2 CUB domains span residues 285–397 (CGET…YEAL) and 398–509 (CGGE…NYFK). N-linked (GlcNAc...) asparagine glycans are attached at residues asparagine 295 and asparagine 326. 8 cysteine pairs are disulfide-bonded: cysteine 338–cysteine 360, cysteine 398–cysteine 424, cysteine 451–cysteine 473, cysteine 514–cysteine 526, cysteine 522–cysteine 535, cysteine 537–cysteine 550, cysteine 554–cysteine 580, and cysteine 607–cysteine 629. The EGF-like; calcium-binding domain occupies 510 to 551 (EVDECSRPNNGGCEQRCVNTLGSYKCACDPGYELGQDKKSCE). The CUB 3 domain occupies 554–666 (CGGFLTKLNG…KGFQANFFSE (113 aa)). Asparagine 562 is a glycosylation site (N-linked (GlcNAc...) asparagine). Residues 682-707 (RGQQNQAPKRVRPRMRLRTVKKTRPP) are disordered. Residues 690-707 (KRVRPRMRLRTVKKTRPP) show a composition bias toward basic residues.

In terms of assembly, interacts with olfml3/ont1. Requires Zn(2+) as cofactor. Post-translationally, proteolytically activated in the trans-Golgi network by furin-like/paired basic proprotein convertases, cleavage is not required for secretion.

It localises to the golgi apparatus. The protein resides in the trans-Golgi network. It is found in the secreted. The protein localises to the extracellular space. Its subcellular location is the extracellular matrix. Its function is as follows. Metalloprotease involved in pattern formation in gastrula and later differentiation of developing organs. Able to cleave chordin (chrd), suggesting that it may act in dorsoventral patterning during early development by regulating the chordin (chrd) activity. The polypeptide is Bone morphogenetic protein 1 (bmp1) (Xenopus laevis (African clawed frog)).